The chain runs to 171 residues: uncharacterized protein (171 aa).

Disordered stretches follow at residues 27 to 53 (DCPG…KMVL) and 82 to 108 (GHLE…PSSS). The segment covering 32-50 (GNNNREPSISTRGRTSSSK) has biased composition (polar residues).

This is an uncharacterized protein from Homo sapiens (Human).